The primary structure comprises 462 residues: Elongation factor 1-alpha 1 (462 aa).

The residue at position 2 (G2) is a N,N,N-trimethylglycine. In terms of domain architecture, tr-type G spans 5–242 (KTHINIVVIG…DCILPPTRPT (238 aa)). Positions 14–21 (GHVDSGKS) are G1. Residue 14-21 (GHVDSGKS) coordinates GTP. K36 bears the N6,N6,N6-trimethyllysine; alternate mark. An N6,N6-dimethyllysine; alternate modification is found at K36. The residue at position 36 (K36) is an N6-methyllysine; alternate. K55 is subject to N6,N6-dimethyllysine. Positions 70–74 (GITID) are G2. Position 79 is an N6,N6,N6-trimethyllysine; by EEF1AKMT1 (K79). The segment at 91–94 (DAPG) is G3. Position 153-156 (153-156 (NKMD)) interacts with GTP. The segment at 153–156 (NKMD) is G4. K165 carries the post-translational modification N6,N6,N6-trimethyllysine; alternate; by EEF1AKMT3. K165 carries the post-translational modification N6,N6-dimethyllysine; alternate; by EEF1AKMT3. Position 165 is an N6-acetyllysine; alternate (K165). Position 165 is an N6-methyllysine; alternate; by EEF1AKMT3 (K165). K172 is subject to N6-acetyllysine. GTP is bound at residue 194–196 (SGW). The tract at residues 194 to 196 (SGW) is G5. K273 is modified (N6-acetyllysine). Residue S300 is modified to Phosphoserine; by TGFBR1. E301 is subject to 5-glutamyl glycerylphosphorylethanolamine. N6,N6,N6-trimethyllysine; by EEF1AKMT2 is present on K318. E374 carries the post-translational modification 5-glutamyl glycerylphosphorylethanolamine. K385 is covalently cross-linked (Glycyl lysine isopeptide (Lys-Gly) (interchain with G-Cter in ubiquitin)). K392 carries the N6-acetyllysine; alternate modification. The residue at position 392 (K392) is an N6-succinyllysine; alternate. T432 is modified (phosphothreonine; by PASK). K439 bears the N6-acetyllysine mark.

This sequence belongs to the TRAFAC class translation factor GTPase superfamily. Classic translation factor GTPase family. EF-Tu/EF-1A subfamily. As to quaternary structure, found in a nuclear export complex with XPO5, EEF1A1, Ran and aminoacylated tRNA. Interacts with PARP1 and TXK. Interacts with KARS1. May interact with ERGIC2. Interacts with IFIT1 (via TPR repeats 4-7). Interacts with DLC1, facilitating distribution to the membrane periphery and ruffles upon growth factor stimulation. Interacts with ZPR1; the interaction occurs in a epidermal growth factor (EGF)-dependent manner. Interacts with PPP1R16B. Interacts with SPHK1 and SPHK2; both interactions increase SPHK1 and SPHK2 kinase activity. Interacts with guanyl-nucleotide exchange factor EEF1B2. Interacts (via middle-region) with HTATIP2 (via N-terminus); the interaction is direct and competes with EEF1A1 binding to guanyl-nucleotide exchange factor EEF1B2, thereby inhibiting GDP for GTP exchange and reactivation of EEF1A1. Interacts with tRNA. Post-translationally, ISGylated. In terms of processing, phosphorylated by TXK. Phosphorylation by PASK increases translation efficiency. Phosphorylated by ROCK2. Phosphorylation by TGFBR1 inhibits translation elongation. Trimethylated at Lys-79 by EEF1AKMT1. Methylated at Lys-165 by EEF1AKMT3, methylation by EEF1AKMT3 is dynamic as well as inducible by stress conditions, such as ER-stress, and plays a regulatory role on mRNA translation. Trimethylated at Lys-318 by EEF1AKMT2. Mono-, di-, and trimethylated at Lys-36 by EEF1AKMT4; trimethylated form is predominant. Methylation by EEF1AKMT4 contributes to the fine-tuning of translation rates for a subset of tRNAs. Trimethylated at Gly-2 by METTL13. Mono- and dimethylated at Lys-55 by METTL13; dimethylated form is predominant. Post-translationally, ubiquitinated at Lys-385 by RNF14 in response to ribosome collisions (ribosome stalling), leading to its degradation by the proteasome and rescue of stalled ribosomes.

The protein resides in the cytoplasm. It is found in the nucleus. Its subcellular location is the nucleolus. It localises to the cell membrane. It carries out the reaction GTP + H2O = GDP + phosphate + H(+). Functionally, translation elongation factor that catalyzes the GTP-dependent binding of aminoacyl-tRNA (aa-tRNA) to the A-site of ribosomes during the elongation phase of protein synthesis. Base pairing between the mRNA codon and the aa-tRNA anticodon promotes GTP hydrolysis, releasing the aa-tRNA from EEF1A1 and allowing its accommodation into the ribosome. The growing protein chain is subsequently transferred from the P-site peptidyl tRNA to the A-site aa-tRNA, extending it by one amino acid through ribosome-catalyzed peptide bond formation. Also plays a role in the positive regulation of IFNG transcription in T-helper 1 cells as part of an IFNG promoter-binding complex with TXK and PARP1. Also plays a role in cytoskeleton organization by promoting actin bundling. The sequence is that of Elongation factor 1-alpha 1 (EEF1A1) from Cricetulus griseus (Chinese hamster).